Reading from the N-terminus, the 309-residue chain is Tagatose-6-phosphate kinase (309 aa).

This sequence belongs to the carbohydrate kinase PfkB family. LacC subfamily.

The enzyme catalyses D-tagatofuranose 6-phosphate + ATP = D-tagatofuranose 1,6-bisphosphate + ADP + H(+). It functions in the pathway carbohydrate metabolism; D-tagatose 6-phosphate degradation; D-glyceraldehyde 3-phosphate and glycerone phosphate from D-tagatose 6-phosphate: step 1/2. This is Tagatose-6-phosphate kinase from Streptococcus pyogenes serotype M28 (strain MGAS6180).